Here is a 257-residue protein sequence, read N- to C-terminus: uncharacterized protein (257 aa).

Residues Ser-122 and His-236 each act as charge relay system in the active site.

It belongs to the peptidase S9B family.

This is an uncharacterized protein from Bacillus subtilis (strain 168).